We begin with the raw amino-acid sequence, 195 residues long: Holliday junction branch migration complex subunit RuvA (195 aa).

The segment at 1–64 is domain I; sequence MIASIRGVIQ…EDALTLYGFS (64 aa). The interval 65–139 is domain II; the sequence is DNAQRSLFEQ…GKIDFRQLAA (75 aa). Residues 139-143 form a flexible linker region; the sequence is ASGST. A domain III region spans residues 144–195; the sequence is SVSALDRELSEILVSLGYSAAEAAAAIASLPSDAPPTLEERLRLALRYFGSA.

The protein belongs to the RuvA family. Homotetramer. Forms an RuvA(8)-RuvB(12)-Holliday junction (HJ) complex. HJ DNA is sandwiched between 2 RuvA tetramers; dsDNA enters through RuvA and exits via RuvB. An RuvB hexamer assembles on each DNA strand where it exits the tetramer. Each RuvB hexamer is contacted by two RuvA subunits (via domain III) on 2 adjacent RuvB subunits; this complex drives branch migration. In the full resolvosome a probable DNA-RuvA(4)-RuvB(12)-RuvC(2) complex forms which resolves the HJ.

The protein localises to the cytoplasm. Its function is as follows. The RuvA-RuvB-RuvC complex processes Holliday junction (HJ) DNA during genetic recombination and DNA repair, while the RuvA-RuvB complex plays an important role in the rescue of blocked DNA replication forks via replication fork reversal (RFR). RuvA specifically binds to HJ cruciform DNA, conferring on it an open structure. The RuvB hexamer acts as an ATP-dependent pump, pulling dsDNA into and through the RuvAB complex. HJ branch migration allows RuvC to scan DNA until it finds its consensus sequence, where it cleaves and resolves the cruciform DNA. The polypeptide is Holliday junction branch migration complex subunit RuvA (Chloroflexus aggregans (strain MD-66 / DSM 9485)).